Reading from the N-terminus, the 590-residue chain is Protein NRT1/ PTR FAMILY 6.3 (590 aa).

A run of 2 helical transmembrane segments spans residues 46-66 and 77-97; these read LTTL…MHLG and FLGT…TFLG. Threonine 101 is subject to Phosphothreonine; by CIPK23. 10 helical membrane passes run 102–122, 143–163, 193–213, 219–239, 342–362, 374–394, 423–443, 460–480, 501–521, and 542–562; these read IAIF…STII, GIQL…TGGV, FFFC…YVQD, WGYG…LAGT, MLPI…LTTL, IGSF…GLLL, IGLG…VELK, LGFY…ALIY, GLLL…VTIV, and YNFY…FLVF. Substrate contacts are provided by histidine 356 and threonine 360.

It belongs to the major facilitator superfamily. Proton-dependent oligopeptide transporter (POT/PTR) (TC 2.A.17) family. Monomer and homodimer. The dimer has the 2 monomers in the same orientation. Interacts with CIPK23. Acts as a high-affinity nitrate transporter when phosphorylated and as a low-affinity transporter when dephosphorylated. Forms homodimer when unphosphorylated and monomer when phosphorylated. Low nitrogen concentration in the medium stimulates phosphorylation. Phosphorylation also regulates the nitrate signaling. Expressed in the stele in lateral root primordia before emergence and in the tip of primary and emerged lateral roots. Detected in emerging and immature leaves, guard cells, flower buds, style, stigma, anthers and pollen grains. Not detected in the shoot apical meristem.

The protein localises to the membrane. Functionally, dual affinity nitrate transporter. Involved in proton-dependent nitrate uptake and in the regulation of the nitrate transporter NRT2.1. Also acts as a nitrate sensor that trigger a specific signaling pathway stimulating lateral root growth and seed germination. The uptake activity is not required for sensor function. Displays an auxin transport facilitation inhibited by high nitrate concentration. Required to prevent auxin accumulation in preemerged lateral root primordia and young lateral roots when external nitrate concentration is low or null. May be involved in the basipetal transport of auxin out of the lateral root tips. Acts as a bidirectional transporter involved in root-to-shoot nitrate translocation. Recognizes specifically nitrate and chlorate, but not nitrite, alanine, sulfate, phosphate or the di-peptide Ala-Ala. In Arabidopsis thaliana (Mouse-ear cress), this protein is Protein NRT1/ PTR FAMILY 6.3 (NPF6.3).